A 308-amino-acid polypeptide reads, in one-letter code: Transaldolase (308 aa).

Lys-125 (schiff-base intermediate with substrate) is an active-site residue.

This sequence belongs to the transaldolase family. Type 1 subfamily. Homodimer.

It is found in the cytoplasm. The catalysed reaction is D-sedoheptulose 7-phosphate + D-glyceraldehyde 3-phosphate = D-erythrose 4-phosphate + beta-D-fructose 6-phosphate. Its pathway is carbohydrate degradation; pentose phosphate pathway; D-glyceraldehyde 3-phosphate and beta-D-fructose 6-phosphate from D-ribose 5-phosphate and D-xylulose 5-phosphate (non-oxidative stage): step 2/3. Functionally, transaldolase is important for the balance of metabolites in the pentose-phosphate pathway. The chain is Transaldolase from Pseudomonas fluorescens (strain Pf0-1).